Here is a 437-residue protein sequence, read N- to C-terminus: UDP-N-acetylmuramoylalanine--D-glutamate ligase (437 aa).

112–118 (GSNGKST) is an ATP binding site.

It belongs to the MurCDEF family.

The protein resides in the cytoplasm. The catalysed reaction is UDP-N-acetyl-alpha-D-muramoyl-L-alanine + D-glutamate + ATP = UDP-N-acetyl-alpha-D-muramoyl-L-alanyl-D-glutamate + ADP + phosphate + H(+). The protein operates within cell wall biogenesis; peptidoglycan biosynthesis. In terms of biological role, cell wall formation. Catalyzes the addition of glutamate to the nucleotide precursor UDP-N-acetylmuramoyl-L-alanine (UMA). This chain is UDP-N-acetylmuramoylalanine--D-glutamate ligase, found in Haemophilus influenzae (strain 86-028NP).